A 154-amino-acid chain; its full sequence is Transcriptional repressor NrdR (154 aa).

The segment at 3–34 is a zinc-finger region; that stretch reads CPYCRHPDSRVVDSREADDGQLIRRRRSCPEC. The 91-residue stretch at 46–136 folds into the ATP-cone domain; the sequence is LAVVKRSGVT…VYRSFESLAD (91 aa).

The protein belongs to the NrdR family. Zn(2+) serves as cofactor.

In terms of biological role, negatively regulates transcription of bacterial ribonucleotide reductase nrd genes and operons by binding to NrdR-boxes. This chain is Transcriptional repressor NrdR, found in Salinispora tropica (strain ATCC BAA-916 / DSM 44818 / JCM 13857 / NBRC 105044 / CNB-440).